A 438-amino-acid chain; its full sequence is MRDNTAKGITAGSGSQQTTYDPARTEATLTTTTFALRRYDLAGRALYDLDFSKLNPQTPTRDANCQITFNPFGGFGLSGSAPQQWNEVKNKVPVEVAQDPTDPYRFAVLLVPRSVVYYEQLQRGLALPNQGSSSGSGQQNTTIGAYGLKVKNAEADTAKSNEKLQGDESKSSNGSSSTSTTTQRGSTNSDTKVKALKIEVKKKSDSEDNGQLQLEKNDLANAPIKRGEESGQSVQLKADDFGTAPSSSGSGGNSNPGSPTPWRPWLATEQIHKDLPKWSASILILYDAPYARNRTAIDRVDHLDPKVMTANYPPSWRMPKWNHHGLWDWKARDVLFQTTGFDESNTSNTKQGFQKEADSDKSAPIALPFEAYFANIGNLTWFGQALLVFGGNGHVTKSAHTAPLSIWLYIYLVKAVTFRLLLANSLLSKSNIYKKTAN.

2 disordered regions span residues 1–22 and 156–264; these read MRDN…TYDP and DTAK…PWRP. Basic and acidic residues predominate over residues 156–170; sequence DTAKSNEKLQGDESK. The segment covering 171-189 has biased composition (low complexity); the sequence is SSNGSSSTSTTTQRGSTNS. A compositionally biased stretch (basic and acidic residues) spans 191–206; it reads TKVKALKIEVKKKSDS.

This sequence belongs to the adhesin P1 family.

This is an uncharacterized protein from Mycoplasma pneumoniae (strain ATCC 29342 / M129 / Subtype 1) (Mycoplasmoides pneumoniae).